The chain runs to 231 residues: Ribosomal RNA small subunit methyltransferase G (231 aa).

Residues glycine 75, 125-126 (GE), and arginine 140 contribute to the S-adenosyl-L-methionine site. A compositionally biased stretch (acidic residues) spans 204-213 (AEAEEGDSPE). The interval 204 to 231 (AEAEEGDSPEAADASRGVILELTKKNKG) is disordered.

It belongs to the methyltransferase superfamily. RNA methyltransferase RsmG family.

Its subcellular location is the cytoplasm. Functionally, specifically methylates the N7 position of a guanine in 16S rRNA. This Rhodopirellula baltica (strain DSM 10527 / NCIMB 13988 / SH1) protein is Ribosomal RNA small subunit methyltransferase G.